Consider the following 515-residue polypeptide: Cytochrome P450 1A1 (515 aa).

F225 is a substrate binding site. C459 is a binding site for heme.

The protein belongs to the cytochrome P450 family. Heme serves as cofactor.

The protein resides in the endoplasmic reticulum membrane. It is found in the microsome membrane. The enzyme catalyses an organic molecule + reduced [NADPH--hemoprotein reductase] + O2 = an alcohol + oxidized [NADPH--hemoprotein reductase] + H2O + H(+). In terms of biological role, cytochromes P450 are a group of heme-thiolate monooxygenases. They oxidize a variety of structurally unrelated compounds, including steroids, fatty acids, and xenobiotics. This Microgadus tomcod (Atlantic tomcod) protein is Cytochrome P450 1A1 (cyp1a1).